The chain runs to 294 residues: Probable aspartoacylase (294 aa).

His14 and Glu17 together coordinate Zn(2+). Substrate is bound by residues Arg56 and 63 to 64; that span reads NR. His106 lines the Zn(2+) pocket. Glu164 and Tyr275 together coordinate substrate.

Belongs to the AspA/AstE family. Aspartoacylase subfamily. The cofactor is Zn(2+).

The catalysed reaction is an N-acyl-L-aspartate + H2O = a carboxylate + L-aspartate. This is Probable aspartoacylase from Nostoc sp. (strain PCC 7120 / SAG 25.82 / UTEX 2576).